Reading from the N-terminus, the 278-residue chain is 4-deoxy-L-threo-5-hexosulose-uronate ketol-isomerase (278 aa).

The Zn(2+) site is built by H196, H198, E203, and H245.

This sequence belongs to the KduI family. The cofactor is Zn(2+).

It catalyses the reaction 5-dehydro-4-deoxy-D-glucuronate = 3-deoxy-D-glycero-2,5-hexodiulosonate. It participates in glycan metabolism; pectin degradation; 2-dehydro-3-deoxy-D-gluconate from pectin: step 4/5. In terms of biological role, catalyzes the isomerization of 5-dehydro-4-deoxy-D-glucuronate to 3-deoxy-D-glycero-2,5-hexodiulosonate. In Shigella sonnei (strain Ss046), this protein is 4-deoxy-L-threo-5-hexosulose-uronate ketol-isomerase.